Reading from the N-terminus, the 370-residue chain is Cobalt-precorrin-5B C(1)-methyltransferase (370 aa).

It belongs to the CbiD family.

The enzyme catalyses Co-precorrin-5B + S-adenosyl-L-methionine = Co-precorrin-6A + S-adenosyl-L-homocysteine. It participates in cofactor biosynthesis; adenosylcobalamin biosynthesis; cob(II)yrinate a,c-diamide from sirohydrochlorin (anaerobic route): step 6/10. Functionally, catalyzes the methylation of C-1 in cobalt-precorrin-5B to form cobalt-precorrin-6A. The polypeptide is Cobalt-precorrin-5B C(1)-methyltransferase (Prochlorococcus marinus (strain MIT 9215)).